A 267-amino-acid polypeptide reads, in one-letter code: Mannose-specific lectin 1 (267 aa).

An N-terminal signal peptide occupies residues 1-24 (MAKSLVLSSLLLALLLAAPLASLA). Bulb-type lectin domains are found at residues 26-136 (NNVL…APNR) and 150-260 (RNVL…SPAR). Cystine bridges form between Cys54/Cys76 and Cys178/Cys203.

In terms of assembly, heterotetramer of 2 domain 1 and 2 domain 2 chains arranged as a dimer of domain 1/domain 2 heterodimers.

In terms of biological role, mannose-specific lectin. Has weak agglutinating activity towards trypsin-treated erythrocytes from rabbit but not from human. The chain is Mannose-specific lectin 1 from Crocus vernus (Dutch crocus).